The following is a 38-amino-acid chain: Photosystem II reaction center protein L (38 aa).

Residues 17 to 37 (SLYWGLLLIFVLAVLFSNYFF) form a helical membrane-spanning segment.

This sequence belongs to the PsbL family. In terms of assembly, PSII is composed of 1 copy each of membrane proteins PsbA, PsbB, PsbC, PsbD, PsbE, PsbF, PsbH, PsbI, PsbJ, PsbK, PsbL, PsbM, PsbT, PsbX, PsbY, PsbZ, Psb30/Ycf12, at least 3 peripheral proteins of the oxygen-evolving complex and a large number of cofactors. It forms dimeric complexes.

It localises to the plastid. The protein resides in the chloroplast thylakoid membrane. One of the components of the core complex of photosystem II (PSII). PSII is a light-driven water:plastoquinone oxidoreductase that uses light energy to abstract electrons from H(2)O, generating O(2) and a proton gradient subsequently used for ATP formation. It consists of a core antenna complex that captures photons, and an electron transfer chain that converts photonic excitation into a charge separation. This subunit is found at the monomer-monomer interface and is required for correct PSII assembly and/or dimerization. In Adiantum capillus-veneris (Maidenhair fern), this protein is Photosystem II reaction center protein L.